Reading from the N-terminus, the 338-residue chain is Phenylalanine--tRNA ligase alpha subunit (338 aa).

Residue E252 coordinates Mg(2+).

The protein belongs to the class-II aminoacyl-tRNA synthetase family. Phe-tRNA synthetase alpha subunit type 1 subfamily. As to quaternary structure, tetramer of two alpha and two beta subunits. Mg(2+) is required as a cofactor.

It is found in the cytoplasm. It carries out the reaction tRNA(Phe) + L-phenylalanine + ATP = L-phenylalanyl-tRNA(Phe) + AMP + diphosphate + H(+). In Aquifex aeolicus (strain VF5), this protein is Phenylalanine--tRNA ligase alpha subunit (pheS).